The sequence spans 368 residues: Quinolinate synthase (368 aa).

Histidine 46 and serine 63 together coordinate iminosuccinate. Position 110 (cysteine 110) interacts with [4Fe-4S] cluster. Iminosuccinate-binding positions include 141-143 (YVN) and serine 162. [4Fe-4S] cluster is bound at residue cysteine 230. Iminosuccinate is bound by residues 256–258 (HPE) and threonine 273. Cysteine 320 contacts [4Fe-4S] cluster.

This sequence belongs to the quinolinate synthase family. Type 3 subfamily. Requires [4Fe-4S] cluster as cofactor.

It localises to the cytoplasm. It catalyses the reaction iminosuccinate + dihydroxyacetone phosphate = quinolinate + phosphate + 2 H2O + H(+). It functions in the pathway cofactor biosynthesis; NAD(+) biosynthesis; quinolinate from iminoaspartate: step 1/1. Its function is as follows. Catalyzes the condensation of iminoaspartate with dihydroxyacetone phosphate to form quinolinate. The sequence is that of Quinolinate synthase from Bacillus mycoides (strain KBAB4) (Bacillus weihenstephanensis).